The sequence spans 496 residues: MHAKSLTELRAALDAKECSAVELAQHYLKRIDAARDLNAFVHVDAELTLAQAKAADAALANGEAGPLAGLPIAHKDVFVTRGWRSTAGSKMLANYASPFDATVVARLSAAGMVTLGKTNMDEFAMGSSNENSAFGPVKNPWDTSAVPGGSSGGSSAAVAAGLAPAATGTDTGGSIRQPASFAGVTGIKPTYGRVSRYGMIAFASSLDQGGPMARSAADCALLLNAMAGFDERDSTSLERADEDYTRHLGKAWAAGGDAGKPLAGLRIGLPAEYFGAGLADDVRAAIDAALKTYEALGATLVPVSLPKTELSIPVYYVIAPAEASSNLSRFDGVRYGHRAAEYRDLLDMYKKSRAEGFGPEVKRRILVGTYVLSHGYYDAYYLQAQKIRRIIAQDFQEAFKSCDVIMGPASPTVAWDIGAKGDDPVQMYLADIYTLSVSLAGLPGMSVPCGFGAGANAKRPVGLQIIGNYFDEARMLQVADAFQRATDWHVQEPAGV.

Catalysis depends on charge relay system residues Lys75 and Ser150. The Acyl-ester intermediate role is filled by Ser174.

The protein belongs to the amidase family. GatA subfamily. As to quaternary structure, heterotrimer of A, B and C subunits.

The catalysed reaction is L-glutamyl-tRNA(Gln) + L-glutamine + ATP + H2O = L-glutaminyl-tRNA(Gln) + L-glutamate + ADP + phosphate + H(+). Its function is as follows. Allows the formation of correctly charged Gln-tRNA(Gln) through the transamidation of misacylated Glu-tRNA(Gln) in organisms which lack glutaminyl-tRNA synthetase. The reaction takes place in the presence of glutamine and ATP through an activated gamma-phospho-Glu-tRNA(Gln). This chain is Glutamyl-tRNA(Gln) amidotransferase subunit A, found in Burkholderia pseudomallei (strain 668).